The following is a 223-amino-acid chain: uncharacterized protein (223 aa).

A Tyr recombinase domain is found at 29-220 (KQTYKMFKED…AKEILKNIGD (192 aa)). Catalysis depends on residues Arg-71, Lys-103, His-170, Arg-173, and His-196. The active-site O-(3'-phospho-DNA)-tyrosine intermediate is the Tyr-205.

Belongs to the 'phage' integrase family.

This is an uncharacterized protein from Methanocaldococcus jannaschii (strain ATCC 43067 / DSM 2661 / JAL-1 / JCM 10045 / NBRC 100440) (Methanococcus jannaschii).